The chain runs to 192 residues: Peptidyl-tRNA hydrolase (192 aa).

A tRNA-binding site is contributed by Y14. Catalysis depends on H19, which acts as the Proton acceptor. The tRNA site is built by Y64, N66, and N112.

This sequence belongs to the PTH family. Monomer.

The protein resides in the cytoplasm. It carries out the reaction an N-acyl-L-alpha-aminoacyl-tRNA + H2O = an N-acyl-L-amino acid + a tRNA + H(+). In terms of biological role, hydrolyzes ribosome-free peptidyl-tRNAs (with 1 or more amino acids incorporated), which drop off the ribosome during protein synthesis, or as a result of ribosome stalling. Functionally, catalyzes the release of premature peptidyl moieties from peptidyl-tRNA molecules trapped in stalled 50S ribosomal subunits, and thus maintains levels of free tRNAs and 50S ribosomes. This Anaeromyxobacter dehalogenans (strain 2CP-C) protein is Peptidyl-tRNA hydrolase.